Here is a 57-residue protein sequence, read N- to C-terminus: Large ribosomal subunit protein bL32 (57 aa).

Basic residues predominate over residues 1–16 (MAVQKSRKTPSRRGMR). The interval 1-37 (MAVQKSRKTPSRRGMRRSHDALSTTAITVDETTGELH) is disordered. Over residues 21–31 (ALSTTAITVDE) the composition is skewed to polar residues.

Belongs to the bacterial ribosomal protein bL32 family.

The sequence is that of Large ribosomal subunit protein bL32 from Hydrogenovibrio crunogenus (strain DSM 25203 / XCL-2) (Thiomicrospira crunogena).